We begin with the raw amino-acid sequence, 500 residues long: Lysine--tRNA ligase (500 aa).

2 residues coordinate Mg(2+): E402 and E409.

It belongs to the class-II aminoacyl-tRNA synthetase family. In terms of assembly, homodimer. Requires Mg(2+) as cofactor.

The protein resides in the cytoplasm. The catalysed reaction is tRNA(Lys) + L-lysine + ATP = L-lysyl-tRNA(Lys) + AMP + diphosphate. The polypeptide is Lysine--tRNA ligase (Buchnera aphidicola subsp. Baizongia pistaciae (strain Bp)).